The chain runs to 211 residues: MTRPSARHVLPEFTERTSAGTRTSDPYSKLLQERIVFLGTPVDETSANDVTAQLMYLEHQAPDRDIELYVNSPGGSFTAMTAIYDTMRYVACDVATTCLGQAGPSAAVLLAAGTPGKRAALPGARVVLHQPALTEPVRGQAGDLAVHAAELVRVRARLEEILVRHTGRTPGQVAADLERDTVLDARQAREYGLVDRIVPGRRTPPASSGAR.

A disordered region spans residues 1–24 (MTRPSARHVLPEFTERTSAGTRTS). H129 is an active-site residue.

It belongs to the peptidase S14 family.

Its function is as follows. Has lost one of the conserved residue (Ser) proposed to be part of the active site. Therefore it could be inactive. The sequence is that of Putative ATP-dependent Clp protease proteolytic subunit-like from Streptomyces coelicolor (strain ATCC BAA-471 / A3(2) / M145).